Here is a 153-residue protein sequence, read N- to C-terminus: 6,7-dimethyl-8-ribityllumazine synthase (153 aa).

5-amino-6-(D-ribitylamino)uracil is bound by residues phenylalanine 21, 55 to 57 (AFE), and 79 to 81 (TVI). 84–85 (AT) is a (2S)-2-hydroxy-3-oxobutyl phosphate binding site. Residue histidine 87 is the Proton donor of the active site. Position 112 (phenylalanine 112) interacts with 5-amino-6-(D-ribitylamino)uracil. Arginine 126 contributes to the (2S)-2-hydroxy-3-oxobutyl phosphate binding site.

It belongs to the DMRL synthase family. Forms an icosahedral capsid composed of 60 subunits, arranged as a dodecamer of pentamers.

It carries out the reaction (2S)-2-hydroxy-3-oxobutyl phosphate + 5-amino-6-(D-ribitylamino)uracil = 6,7-dimethyl-8-(1-D-ribityl)lumazine + phosphate + 2 H2O + H(+). It functions in the pathway cofactor biosynthesis; riboflavin biosynthesis; riboflavin from 2-hydroxy-3-oxobutyl phosphate and 5-amino-6-(D-ribitylamino)uracil: step 1/2. Its function is as follows. Catalyzes the formation of 6,7-dimethyl-8-ribityllumazine by condensation of 5-amino-6-(D-ribitylamino)uracil with 3,4-dihydroxy-2-butanone 4-phosphate. This is the penultimate step in the biosynthesis of riboflavin. The polypeptide is 6,7-dimethyl-8-ribityllumazine synthase (Bacillus cereus (strain AH187)).